The following is a 469-amino-acid chain: MPQFLSEDFLLDSEFARRLYHEYAVDQPIFDYHCHLPPEQIAENYRFKNLYDIWLKGDHYKWRAMRTNGVPERLCTGDASDWEKFEAWAATVPHTIGNPLYHWTHLELRRPFGVTGTLLSPSTAKDIWDRCNAMLERDDFTARGIMQQMNVKMVGTTDDPIDDLRHHKTVAQDSSFSIKVLPSWRPDKAFNIELATFNDYMAKLGEVSDTDIRRFSDLQAALTKRLDHFAAHGCKVSDHALDVVMFAEADDATLDSILARRLSGETLSEHEVAQFKTGVLVWLGAEYARRGWVQQYHIGALRNNNLRQFKLLGPDVGFDSINDRPLAQELSRLLSKQNEENLLPKTILYCLNPRDNEVLGTMIGNFQGEGMPGKMQFGSGWWFNDQKDGMQRQMTQLAQLGLLSRFVGMLTDSRSFLSYTRHEYFRRILCQMIGRWVEDGEAPADLPLLGEMVKNISFDNAKNYFAIEL.

It belongs to the metallo-dependent hydrolases superfamily. Uronate isomerase family.

The enzyme catalyses D-glucuronate = D-fructuronate. It catalyses the reaction aldehydo-D-galacturonate = keto-D-tagaturonate. Its pathway is carbohydrate metabolism; pentose and glucuronate interconversion. The polypeptide is Uronate isomerase (Pectobacterium carotovorum subsp. carotovorum (strain PC1)).